Consider the following 148-residue polypeptide: D-aminoacyl-tRNA deacylase (148 aa).

The short motif at 136–137 (GP) is the Gly-cisPro motif, important for rejection of L-amino acids element.

Belongs to the DTD family. As to quaternary structure, homodimer.

The protein resides in the cytoplasm. It catalyses the reaction glycyl-tRNA(Ala) + H2O = tRNA(Ala) + glycine + H(+). The catalysed reaction is a D-aminoacyl-tRNA + H2O = a tRNA + a D-alpha-amino acid + H(+). Functionally, an aminoacyl-tRNA editing enzyme that deacylates mischarged D-aminoacyl-tRNAs. Also deacylates mischarged glycyl-tRNA(Ala), protecting cells against glycine mischarging by AlaRS. Acts via tRNA-based rather than protein-based catalysis; rejects L-amino acids rather than detecting D-amino acids in the active site. By recycling D-aminoacyl-tRNA to D-amino acids and free tRNA molecules, this enzyme counteracts the toxicity associated with the formation of D-aminoacyl-tRNA entities in vivo and helps enforce protein L-homochirality. This chain is D-aminoacyl-tRNA deacylase, found in Streptococcus mutans serotype c (strain ATCC 700610 / UA159).